The chain runs to 258 residues: Clathrin light chain 3 (258 aa).

Polar residues predominate over residues 1-18 (MSSTLSNEESGLGDSNRS). The tract at residues 1–96 (MSSTLSNEES…PPPSAMEKEE (96 aa)) is disordered. An N-acetylserine modification is found at Ser-2. A compositionally biased stretch (low complexity) spans 34–50 (SRFQSQRFDSSFSNFDS). Residues 66–79 (RPETQSPPSINSFD) are compositionally biased toward polar residues. Residues 90 to 152 (SAMEKEEGFA…TIENNKKLNR (63 aa)) form an involved in binding clathrin heavy chain region. A coiled-coil region spans residues 105 to 164 (RLNALRLEEKEKEEKEMVQQILEAAEQYKAEFYSKRNVTIENNKKLNREKEKFFLENQEK). Residues 224-234 (LKHNPPTHMKP) show a composition bias toward basic residues. A disordered region spans residues 224-258 (LKHNPPTHMKPKLPSPSGADPNVSVSEQVTVTEKL). Over residues 246–258 (VSVSEQVTVTEKL) the composition is skewed to polar residues.

It belongs to the clathrin light chain family. In terms of assembly, clathrin coats are formed from molecules containing 3 heavy chains and 3 light chains.

The protein resides in the cytoplasmic vesicle membrane. It is found in the membrane. The protein localises to the coated pit. Functionally, clathrin is the major protein of the polyhedral coat of coated pits and vesicles. This chain is Clathrin light chain 3, found in Arabidopsis thaliana (Mouse-ear cress).